We begin with the raw amino-acid sequence, 119 residues long: MNTIDFLEFEQMKKNVAPFKVGDTVKVQVKIVEGDKQRIQAYQGVVISRQNGGIRESFTVRKISNGIGVERIFPLHSPILETVEIVTRGHVRRAKLYYLRKLRGKAARIREKKYVPIAK.

The protein belongs to the bacterial ribosomal protein bL19 family.

In terms of biological role, this protein is located at the 30S-50S ribosomal subunit interface and may play a role in the structure and function of the aminoacyl-tRNA binding site. The protein is Large ribosomal subunit protein bL19 of Pelobacter propionicus (strain DSM 2379 / NBRC 103807 / OttBd1).